The following is a 506-amino-acid chain: 2,3-bisphosphoglycerate-independent phosphoglycerate mutase (506 aa).

Residues Asp12 and Ser63 each contribute to the Mn(2+) site. Catalysis depends on Ser63, which acts as the Phosphoserine intermediate. Residues His122, 151-152 (RD), Arg182, Arg188, 253-256 (RADR), and Lys323 each bind substrate. Residues Asp390, His394, Asp432, His433, and His451 each contribute to the Mn(2+) site.

Belongs to the BPG-independent phosphoglycerate mutase family. In terms of assembly, monomer. Requires Mn(2+) as cofactor.

The enzyme catalyses (2R)-2-phosphoglycerate = (2R)-3-phosphoglycerate. It participates in carbohydrate degradation; glycolysis; pyruvate from D-glyceraldehyde 3-phosphate: step 3/5. Catalyzes the interconversion of 2-phosphoglycerate and 3-phosphoglycerate. This Wolbachia pipientis wMel protein is 2,3-bisphosphoglycerate-independent phosphoglycerate mutase.